The chain runs to 417 residues: Glutamate-1-semialdehyde 2,1-aminomutase (417 aa).

Position 263 is an N6-(pyridoxal phosphate)lysine (K263).

The protein belongs to the class-III pyridoxal-phosphate-dependent aminotransferase family. HemL subfamily. It depends on pyridoxal 5'-phosphate as a cofactor.

The protein localises to the cytoplasm. The enzyme catalyses (S)-4-amino-5-oxopentanoate = 5-aminolevulinate. It participates in porphyrin-containing compound metabolism; protoporphyrin-IX biosynthesis; 5-aminolevulinate from L-glutamyl-tRNA(Glu): step 2/2. The protein is Glutamate-1-semialdehyde 2,1-aminomutase of Methanospirillum hungatei JF-1 (strain ATCC 27890 / DSM 864 / NBRC 100397 / JF-1).